A 264-amino-acid polypeptide reads, in one-letter code: uncharacterized protein (264 aa).

8 helical membrane passes run 19–39 (LFPAVIFASLAITQIIPLPFL), 42–62 (YDWLLIICVLMQLWMVRSGLE), 69–89 (VITLFHLIGLALELFKVHMGS), 100–120 (IFGVPLYSGFMYASVASYLCQ), 136–156 (FAVVPLAAAIYLNFFTHHFSI), 160–180 (WWLSGLVIIVFWQTWVTYEVN), 192–212 (FILIGFFIWIAENIATFFGAW), and 223–243 (LVHLGKVSSWLLLVIVSFLIV).

Its subcellular location is the cell membrane. This is an uncharacterized protein from Bacillus subtilis (strain 168).